We begin with the raw amino-acid sequence, 261 residues long: MNKRNWLLALSLSLAFSPCYADWAKLKAAASDLGAAVSETSKEVWQDVSDFSKKSWASISAWGEEAFNTAGVWTDKSIATGKEWLKAADKELNEMLNPKTAKEARIAINTMADTALIRLFNEQPSAKLLFDKAYGYAVFDSRKFSLMLHTNQGAGVAVNRKTGKHTYMKMFGAGLAAGIGGKFYQQVILFEDKARFDAFVTQGWEATSEVGVVAGKESAELTAKYNGGMAIYQIGEKGLLLDANISGSKYWIDKDLTETSR.

An N-terminal signal peptide occupies residues 1-21; sequence MNKRNWLLALSLSLAFSPCYA. An SYLF domain region spans residues 99-261; sequence KTAKEARIAI…IDKDLTETSR (163 aa).

Its subcellular location is the secreted. The protein localises to the host. Stimulates the proliferation of insulin-producing beta cells during development in gnotobiotic zebrafish and mice. BefA is a microbiome-derived protein that traffics from the host intestinal lumen to the pancreas to act directly on pancreatic islets. In pancreas, interacts directly with host beta cells and elicits their proliferation via a mechanism of increasing membrane permeabilization. Can also permeabilize bacterial cell membranes, but does not show killing of target bacteria. In Aeromonas veronii, this protein is Beta cell expansion factor A.